Here is a 155-residue protein sequence, read N- to C-terminus: RING finger protein 122 (155 aa).

The helical transmembrane segment at 40–60 (VIFGTGIFVFMLSLIFCCYFI) threads the bilayer. The segment at 93–134 (CAVCLEDFKGKDELGVLPCQHAFHRKCLVKWLEVRCVCPMCN) adopts an RING-type; atypical zinc-finger fold.

In terms of tissue distribution, widely expressed in several tissues and cell lines.

The protein resides in the golgi apparatus. It localises to the endoplasmic reticulum. Its subcellular location is the membrane. May induce necrosis and apoptosis. May play a role in cell viability. The sequence is that of RING finger protein 122 (RNF122) from Homo sapiens (Human).